Consider the following 438-residue polypeptide: Indole diterpene prenyltransferase paxD (438 aa).

L-tryptophan is bound at residue 80–81 (FM). Residues Arg-102, Lys-190, Arg-264, Lys-266, Tyr-268, Tyr-349, and Tyr-418 each coordinate substrate.

This sequence belongs to the tryptophan dimethylallyltransferase family.

It functions in the pathway secondary metabolite biosynthesis. In terms of biological role, indole diterpene prenyltransferase; part of the gene cluster that mediates the biosynthesis of paxilline, a mycotoxin that acts as an inhibitor of mammalian maxi-K channels. PaxG, the geranylgeranyl diphosphate (GGPP) synthase is proposed to catalyze the first step in paxilline biosynthesis. Condensation of indole-3-glycerol phosphate with GGPP by paxC then forms 3-geranylgeranylindole (3-GGI), followed by epoxidation and cyclization of this intermediate (by paxM and paxB) to form paspaline. Paspaline is subsequently converted to 13-desoxypaxilline by paxP, the latter being then converted to paxilline by paxQ. Finally paxilline can be mono- and di-prenylated by paxD. The polypeptide is Indole diterpene prenyltransferase paxD (Penicillium paxilli).